The following is a 267-amino-acid chain: Phosphonoacetaldehyde hydrolase (267 aa).

Asp-10 (nucleophile) is an active-site residue. The Mg(2+) site is built by Asp-10 and Ala-12. Catalysis depends on Lys-51, which acts as the Schiff-base intermediate with substrate. Position 184 (Asp-184) interacts with Mg(2+).

It belongs to the HAD-like hydrolase superfamily. PhnX family. As to quaternary structure, homodimer. Requires Mg(2+) as cofactor.

It carries out the reaction phosphonoacetaldehyde + H2O = acetaldehyde + phosphate + H(+). Functionally, involved in phosphonate degradation. The protein is Phosphonoacetaldehyde hydrolase of Paraburkholderia xenovorans (strain LB400).